Reading from the N-terminus, the 108-residue chain is Large ribosomal subunit protein uL24 (108 aa).

Belongs to the universal ribosomal protein uL24 family. As to quaternary structure, part of the 50S ribosomal subunit.

In terms of biological role, one of two assembly initiator proteins, it binds directly to the 5'-end of the 23S rRNA, where it nucleates assembly of the 50S subunit. One of the proteins that surrounds the polypeptide exit tunnel on the outside of the subunit. The polypeptide is Large ribosomal subunit protein uL24 (Geobacter metallireducens (strain ATCC 53774 / DSM 7210 / GS-15)).